The primary structure comprises 1161 residues: DNA-directed RNA polymerase 132 kDa polypeptide (1161 aa).

This sequence belongs to the RNA polymerase beta chain family. The DNA-dependent RNA polymerase used for intermediate and late genes expression consists of eight subunits (147) kDa, (133) kDa, (35) kDa, (30) kDa, (22) kDa, (19) kDa, (18) kDa and (7) kDa totalling more than 500 kDa in mass. The same holoenzyme, with the addition of the transcription-specificity factor RAP94, is used for early gene expression.

It localises to the virion. It catalyses the reaction RNA(n) + a ribonucleoside 5'-triphosphate = RNA(n+1) + diphosphate. Its function is as follows. Part of the DNA-dependent RNA polymerase which catalyzes the transcription of viral DNA into RNA using the four ribonucleoside triphosphates as substrates. Responsible for the transcription of early, intermediate and late genes. DNA-dependent RNA polymerase associates with the early transcription factor (ETF), itself composed of D6 and A7, thereby allowing the early genes transcription. Late transcription, and probably also intermediate transcription, require newly synthesized RNA polymerase. The chain is DNA-directed RNA polymerase 132 kDa polypeptide (RPO132) from Fowlpox virus (strain NVSL) (FPV).